The primary structure comprises 930 residues: Isoleucine--tRNA ligase (930 aa).

A 'HIGH' region motif is present at residues 57–67 (PYANGNIHVGH). L-isoleucyl-5'-AMP is bound at residue glutamate 554. The 'KMSKS' region motif lies at 595-599 (KMSKS). Lysine 598 lines the ATP pocket. Zn(2+) is bound by residues cysteine 888, cysteine 891, cysteine 908, and cysteine 911.

This sequence belongs to the class-I aminoacyl-tRNA synthetase family. IleS type 1 subfamily. In terms of assembly, monomer. Requires Zn(2+) as cofactor.

The protein resides in the cytoplasm. The enzyme catalyses tRNA(Ile) + L-isoleucine + ATP = L-isoleucyl-tRNA(Ile) + AMP + diphosphate. In terms of biological role, catalyzes the attachment of isoleucine to tRNA(Ile). As IleRS can inadvertently accommodate and process structurally similar amino acids such as valine, to avoid such errors it has two additional distinct tRNA(Ile)-dependent editing activities. One activity is designated as 'pretransfer' editing and involves the hydrolysis of activated Val-AMP. The other activity is designated 'posttransfer' editing and involves deacylation of mischarged Val-tRNA(Ile). In Streptococcus pneumoniae (strain ATCC BAA-255 / R6), this protein is Isoleucine--tRNA ligase.